A 145-amino-acid chain; its full sequence is Transcriptional regulator MraZ (145 aa).

2 consecutive SpoVT-AbrB domains span residues 5 to 50 and 81 to 124; these read TFNH…ALPQ and AHEV…DRAA.

The protein belongs to the MraZ family. In terms of assembly, forms oligomers.

Its subcellular location is the cytoplasm. It is found in the nucleoid. This is Transcriptional regulator MraZ from Anaeromyxobacter dehalogenans (strain 2CP-1 / ATCC BAA-258).